The primary structure comprises 806 residues: Ribonucleoside-diphosphate reductase large subunit (806 aa).

Residues 1 to 91 enclose the ATP-cone domain; that stretch reads MYVLNRKGEE…TDNLHKNTSD (91 aa). ATP contacts are provided by residues 5 to 6, 11 to 17, Thr-52, and Asp-56; these read NR and EDISFDQ. Ser-215 contacts GDP. Residues Cys-216 and Cys-442 are joined by a disulfide bond. DTTP-binding positions include 224 to 226, Lys-241, Arg-254, and 261 to 262; these read DSI and RG. GDP is bound at residue Asn-425. Catalysis depends on Asn-425, which acts as the Proton acceptor. Cys-427 functions as the Cysteine radical intermediate in the catalytic mechanism. Residues Glu-429 and 604-607 contribute to the GDP site; that span reads TAST. The active-site Proton acceptor is the Glu-429.

It belongs to the ribonucleoside diphosphate reductase large chain family. In terms of assembly, heterodimer of a large and a small subunit.

It catalyses the reaction a 2'-deoxyribonucleoside 5'-diphosphate + [thioredoxin]-disulfide + H2O = a ribonucleoside 5'-diphosphate + [thioredoxin]-dithiol. Its activity is regulated as follows. Under complex allosteric control mediated by deoxynucleoside triphosphates and ATP binding to separate specificity and activation sites on the large subunit. The type of nucleotide bound at the specificity site determines substrate preference. It seems probable that ATP makes the enzyme reduce CDP and UDP, dGTP favors ADP reduction and dTTP favors GDP reduction. Stimulated by ATP and inhibited by dATP binding to the activity site. Functionally, provides the precursors necessary for DNA synthesis. Catalyzes the biosynthesis of deoxyribonucleotides from the corresponding ribonucleotides. This Plasmodium falciparum (isolate Dd2) protein is Ribonucleoside-diphosphate reductase large subunit (RNR1).